Consider the following 140-residue polypeptide: Putative pre-16S rRNA nuclease (140 aa).

It belongs to the YqgF nuclease family.

The protein localises to the cytoplasm. Functionally, could be a nuclease involved in processing of the 5'-end of pre-16S rRNA. This is Putative pre-16S rRNA nuclease from Vibrio vulnificus (strain CMCP6).